Consider the following 436-residue polypeptide: MISISFLNCFFLVFLFLFFSDVHGSYNGLGLKPQMGWNSWNKYACDIDESIILNNAKAIKEEGLLDLGYEYIVMDDCWSKHERNATTGRLEANPDKFPNGIGSMAKKLHDMGFKFGMYSSAGKYTCAGFPGSLNHEQIDADTFADWGVDYLKYDNCFNEGKSGVPLISYERYKRMSDALNKTGRPIFYSLCQWGEDFVWNWGNTIANSWRISGDIFDTFSRKDVRCPCETIECFALQGDHCSVMNIISKASFLSSKAGMNSGWNDLDSLEVGNGGMSFEEYKTHFTMWAILKSPLILGNDVSSMSPMDKLIVSNKELISINQDIGTNPAALIWKKKYGDEYIELFSGRLSNNDWVVAVLNAASEPLKMGIHLSDIFVDALGNAEHDWLATDLWNNNVKLVSDRIRANVASHGVQVWRFQQYKVKNTNDKFFSFNKH.

A signal peptide spans 1 to 24 (MISISFLNCFFLVFLFLFFSDVHG). Cysteines 45 and 77 form a disulfide. A glycan (N-linked (GlcNAc...) asparagine) is linked at N84. An intrachain disulfide couples C126 to C156. D154 functions as the Nucleophile in the catalytic mechanism. N-linked (GlcNAc...) asparagine glycosylation occurs at N180. Catalysis depends on D214, which acts as the Proton donor.

It belongs to the glycosyl hydrolase 27 family.

It localises to the endoplasmic reticulum lumen. It is found in the secreted. It catalyses the reaction Hydrolysis of terminal, non-reducing alpha-D-galactose residues in alpha-D-galactosides, including galactose oligosaccharides, galactomannans and galactolipids.. Its function is as follows. Secreted alpha-galactosidase required for catabolic conversion of melibiose to glucose and galactose. The chain is Alpha-galactosidase mel1 (mel1) from Schizosaccharomyces pombe (strain 972 / ATCC 24843) (Fission yeast).